We begin with the raw amino-acid sequence, 147 residues long: Mid1-interacting protein 1-B (147 aa).

It belongs to the SPOT14 family.

It is found in the nucleus. Its subcellular location is the cytoplasm. The protein localises to the cytoskeleton. Its function is as follows. Involved in stabilization of microtubules. May play a role in the regulation of lipogenesis. The polypeptide is Mid1-interacting protein 1-B (Danio rerio (Zebrafish)).